The chain runs to 254 residues: UPF0246 protein CPR_2119 (254 aa).

Belongs to the UPF0246 family.

In Clostridium perfringens (strain SM101 / Type A), this protein is UPF0246 protein CPR_2119.